The chain runs to 96 residues: Protein Vpr (96 aa).

The tract at residues 1–42 is homooligomerization; the sequence is MEQAPEDQGPQREPHNEWTLELLEEIKNEAVRHFPRVWLHQL. Ser-79, Ser-94, and Ser-96 each carry phosphoserine; by host.

It belongs to the HIV-1 VPR protein family. Homooligomer, may form homodimer. Interacts with p6-gag region of the Pr55 Gag precursor protein through a (Leu-X-X)4 motif near the C-terminus of the P6gag protein. Interacts with host UNG. May interact with host RAD23A/HHR23A. Interacts with host VPRBP/DCAF1, leading to hijack the CUL4A-RBX1-DDB1-DCAF1/VPRBP complex, mediating ubiquitination of host proteins such as TERT and ZGPAT and arrest of the cell cycle in G2 phase. Post-translationally, phosphorylated on several residues by host. These phosphorylations regulate VPR activity for the nuclear import of the HIV-1 pre-integration complex.

It localises to the virion. It is found in the host nucleus. The protein localises to the host extracellular space. Functionally, during virus replication, may deplete host UNG protein, and incude G2-M cell cycle arrest. Acts by targeting specific host proteins for degradation by the 26S proteasome, through association with the cellular CUL4A-DDB1 E3 ligase complex by direct interaction with host VPRPB/DCAF-1. Cell cycle arrest reportedly occurs within hours of infection and is not blocked by antiviral agents, suggesting that it is initiated by the VPR carried into the virion. Additionally, VPR induces apoptosis in a cell cycle dependent manner suggesting that these two effects are mechanistically linked. Detected in the serum and cerebrospinal fluid of AIDS patient, VPR may also induce cell death to bystander cells. Its function is as follows. During virus entry, plays a role in the transport of the viral pre-integration (PIC) complex to the host nucleus. This function is crucial for viral infection of non-dividing macrophages. May act directly at the nuclear pore complex, by binding nucleoporins phenylalanine-glycine (FG)-repeat regions. In Homo sapiens (Human), this protein is Protein Vpr.